A 241-amino-acid chain; its full sequence is Interleukin-6 (241 aa).

A disordered region spans residues 1 to 25 (MNFTEGCEATGRRPGSAGSRRRRAP). The first 46 residues, 1–46 (MNFTEGCEATGRRPGSAGSRRRRAPRPGPVALLPLLLPLLLPPAAA), serve as a signal peptide directing secretion. Cys122 and Cys132 are disulfide-bonded.

It belongs to the IL-6 superfamily. Component of a hexamer of two molecules each of IL6, IL6R and IL6ST; first binds to IL6R to associate with the signaling subunit IL6ST.

It localises to the secreted. Its function is as follows. Cytokine with a wide variety of biological functions in immunity, tissue regeneration, and metabolism. Binds to IL6R, then the complex associates to the signaling subunit IL6ST/gp130 to trigger the intracellular IL6-signaling pathway. The interaction with the membrane-bound IL6R and IL6ST stimulates 'classic signaling', whereas the binding of IL6 and soluble IL6R to IL6ST stimulates 'trans-signaling'. Alternatively, 'cluster signaling' occurs when membrane-bound IL6:IL6R complexes on transmitter cells activate IL6ST receptors on neighboring receiver cells. The sequence is that of Interleukin-6 (IL6) from Gallus gallus (Chicken).